The following is a 412-amino-acid chain: B3 domain-containing protein Os02g0683500 (412 aa).

Positions 1–87 (MEFTTSSRFS…GGGGGGGGEA (87 aa)) are disordered. Over residues 30 to 65 (TATAEAAPAPTSSSSSPAHHAASASASASASGSSTP) the composition is skewed to low complexity. Positions 73–86 (GASGSGGGGGGGGE) are enriched in gly residues. Residues 96-200 (FDKVVTPSDV…RHRLFIDWKR (105 aa)) constitute a DNA-binding region (TF-B3). Residues 374 to 412 (RLLELPPHHHHGAESSAASSPSSSSSSKRDAHSALDLDL) form a disordered region. The segment covering 387–399 (ESSAASSPSSSSS) has biased composition (low complexity). Positions 400–412 (SKRDAHSALDLDL) are enriched in basic and acidic residues.

It is found in the nucleus. In Oryza sativa subsp. japonica (Rice), this protein is B3 domain-containing protein Os02g0683500.